Consider the following 375-residue polypeptide: Tyrosine--tRNA ligase (375 aa).

L-tyrosine-binding residues include tyrosine 37, tyrosine 168, glutamine 172, aspartate 175, and glutamine 190. Positions 251 to 255 (KMSKS) match the 'KMSKS' region motif. Lysine 254 contacts ATP.

It belongs to the class-I aminoacyl-tRNA synthetase family. TyrS type 4 subfamily. In terms of assembly, homodimer.

The protein localises to the cytoplasm. It carries out the reaction tRNA(Tyr) + L-tyrosine + ATP = L-tyrosyl-tRNA(Tyr) + AMP + diphosphate + H(+). Its function is as follows. Catalyzes the attachment of tyrosine to tRNA(Tyr) in a two-step reaction: tyrosine is first activated by ATP to form Tyr-AMP and then transferred to the acceptor end of tRNA(Tyr). The polypeptide is Tyrosine--tRNA ligase (Thermococcus kodakarensis (strain ATCC BAA-918 / JCM 12380 / KOD1) (Pyrococcus kodakaraensis (strain KOD1))).